A 414-amino-acid chain; its full sequence is MLIIEDLRAFEVLDSRGNPTIKAEIMLSDGSMGSAIVPSGASTGKKEALELRDNDERFGGKGVLKAIENINGTIAENIIGLDAFNQTQLDNTLLELDGTKNYSNLGANATLGISMATARAAANALGIPLYRYLGGANASVLPVPMCNIINGGAHANNNVDFQEFMIMPFGFSSFKEGLRSVCEIYAILKKELAALGYSTALGDEGGFAPNLANNTEPLDLLMTCIKKAGYENKIKLALDVASSELYKDGKYYLEGKVFSNEDLIARYEELCAKYPIFSIEDGLAEDDYEGWIKLTQKLGNKIQLVGDDLFVTNEDILREGILKNMANAVLIKPNQIGTITQTMRTVRLAHRNNYRCIMSHRSGESEDAFIADFAVALNTGQIKTGALARGERTAKYNRLLEIELDNDEYLGDKL.

Residue Q162 coordinates (2R)-2-phosphoglycerate. Catalysis depends on E204, which acts as the Proton donor. 3 residues coordinate Mg(2+): D239, E280, and D307. The (2R)-2-phosphoglycerate site is built by K332, R361, S362, and K383. K332 serves as the catalytic Proton acceptor.

Belongs to the enolase family. It depends on Mg(2+) as a cofactor.

Its subcellular location is the cytoplasm. It is found in the secreted. The protein resides in the cell surface. It carries out the reaction (2R)-2-phosphoglycerate = phosphoenolpyruvate + H2O. It participates in carbohydrate degradation; glycolysis; pyruvate from D-glyceraldehyde 3-phosphate: step 4/5. Its function is as follows. Catalyzes the reversible conversion of 2-phosphoglycerate (2-PG) into phosphoenolpyruvate (PEP). It is essential for the degradation of carbohydrates via glycolysis. The chain is Enolase from Campylobacter lari (strain RM2100 / D67 / ATCC BAA-1060).